The following is a 361-amino-acid chain: Phosphoserine aminotransferase (361 aa).

Arginine 42 serves as a coordination point for L-glutamate. Residues 76–77, tryptophan 102, threonine 153, aspartate 173, and glutamine 196 each bind pyridoxal 5'-phosphate; that span reads AR. Residue lysine 197 is modified to N6-(pyridoxal phosphate)lysine. 238–239 is a pyridoxal 5'-phosphate binding site; it reads NT.

This sequence belongs to the class-V pyridoxal-phosphate-dependent aminotransferase family. SerC subfamily. In terms of assembly, homodimer. Requires pyridoxal 5'-phosphate as cofactor.

Its subcellular location is the cytoplasm. It carries out the reaction O-phospho-L-serine + 2-oxoglutarate = 3-phosphooxypyruvate + L-glutamate. The catalysed reaction is 4-(phosphooxy)-L-threonine + 2-oxoglutarate = (R)-3-hydroxy-2-oxo-4-phosphooxybutanoate + L-glutamate. Its pathway is amino-acid biosynthesis; L-serine biosynthesis; L-serine from 3-phospho-D-glycerate: step 2/3. It participates in cofactor biosynthesis; pyridoxine 5'-phosphate biosynthesis; pyridoxine 5'-phosphate from D-erythrose 4-phosphate: step 3/5. Functionally, catalyzes the reversible conversion of 3-phosphohydroxypyruvate to phosphoserine and of 3-hydroxy-2-oxo-4-phosphonooxybutanoate to phosphohydroxythreonine. The polypeptide is Phosphoserine aminotransferase (Yersinia pestis bv. Antiqua (strain Angola)).